A 320-amino-acid chain; its full sequence is MAFPKKKLQGLVAATITPMTENGEINFPVIGQYVDYLVKEQGVKNIFVNGTTGEGLSLSISERRQVAEEWVRQGKNKLDQVVIHVGALNLKESQELAQHAAEIGADGIAVIAPFFFKSQNKDALISFLREVAAAAPALPFYYYHIPSLTGVKIRAEELLDGIQDKIPSFQGLKFSDTDLLDFGQCVDQNHQRQFALLFGVDEQLLSALVLGATGAVGSTYNYLGKKTNQMLEAFEQKDLASALSYQFRIQRFINYVIKLGFGVSQTKAIMTLVSGIPMGPPRLPLQKATQEFTANAEAKLKSLNFLSFPGLKDGNMEACS.

Aceneuramate-binding residues include Thr51 and Thr52. Tyr143 (proton donor) is an active-site residue. The active-site Schiff-base intermediate with substrate is Lys173. Aceneuramate-binding residues include Ser175, Gly199, Asp201, Glu202, and Ser218.

It belongs to the DapA family. NanA subfamily. Homotetramer.

Its subcellular location is the cytoplasm. The enzyme catalyses aceneuramate = aldehydo-N-acetyl-D-mannosamine + pyruvate. Its pathway is amino-sugar metabolism; N-acetylneuraminate degradation. In terms of biological role, catalyzes the cleavage of N-acetylneuraminic acid (sialic acid) to form pyruvate and N-acetylmannosamine via a Schiff base intermediate. It prevents sialic acids from being recycled and returning to the cell surface. Involved in the N-glycolylneuraminic acid (Neu5Gc) degradation pathway. This is N-acetylneuraminate lyase from Rattus norvegicus (Rat).